Consider the following 59-residue polypeptide: Embryonic testis differentiation protein homolog A (59 aa).

The span at 1–10 (MDKEVPKGSP) shows a compositional bias: basic and acidic residues. The interval 1–25 (MDKEVPKGSPREPALNIKKSDKSFK) is disordered.

This is Embryonic testis differentiation protein homolog A from Homo sapiens (Human).